Here is a 365-residue protein sequence, read N- to C-terminus: Succinyl-diaminopimelate desuccinylase (365 aa).

A Zn(2+)-binding site is contributed by His64. Residue Asp66 is part of the active site. Asp95 serves as a coordination point for Zn(2+). Glu125 (proton acceptor) is an active-site residue. The Zn(2+) site is built by Glu126, Glu154, and His339.

Belongs to the peptidase M20A family. DapE subfamily. In terms of assembly, homodimer. It depends on Zn(2+) as a cofactor. Co(2+) serves as cofactor.

The enzyme catalyses N-succinyl-(2S,6S)-2,6-diaminopimelate + H2O = (2S,6S)-2,6-diaminopimelate + succinate. It functions in the pathway amino-acid biosynthesis; L-lysine biosynthesis via DAP pathway; LL-2,6-diaminopimelate from (S)-tetrahydrodipicolinate (succinylase route): step 3/3. Functionally, catalyzes the hydrolysis of N-succinyl-L,L-diaminopimelic acid (SDAP), forming succinate and LL-2,6-diaminopimelate (DAP), an intermediate involved in the bacterial biosynthesis of lysine and meso-diaminopimelic acid, an essential component of bacterial cell walls. This chain is Succinyl-diaminopimelate desuccinylase, found in Campylobacter fetus subsp. fetus (strain 82-40).